The sequence spans 119 residues: Large ribosomal subunit protein uL24 (119 aa).

It belongs to the universal ribosomal protein uL24 family. As to quaternary structure, part of the 50S ribosomal subunit.

Functionally, one of two assembly initiator proteins, it binds directly to the 5'-end of the 23S rRNA, where it nucleates assembly of the 50S subunit. In terms of biological role, one of the proteins that surrounds the polypeptide exit tunnel on the outside of the subunit. This chain is Large ribosomal subunit protein uL24, found in Leifsonia xyli subsp. xyli (strain CTCB07).